The primary structure comprises 411 residues: BRO1 domain-containing protein BROX (411 aa).

The region spanning 90 to 408 (FKWTDTLQGH…DIRPQKDTGC (319 aa)) is the BRO1 domain. Residues 375 to 404 (LTKRPKDDSVKPKPEEDVKPVKEPDIRPQK) show a composition bias toward basic and acidic residues. A disordered region spans residues 375–411 (LTKRPKDDSVKPKPEEDVKPVKEPDIRPQKDTGCSVS). A Cysteine methyl ester modification is found at C408. The S-farnesyl cysteine moiety is linked to residue C408. Residues 409–411 (SVS) constitute a propeptide, removed in mature form.

This sequence belongs to the BROX family. As to quaternary structure, monomer. Interacts with CHMP4B. Interacts with CHMP5: this interaction allows the recruitment of BROX to cellular membranes. Interacts with SYN2; this interaction promotes SYN2 ubiquitination and facilitates the relaxation of mechanical stress imposed by compressive actin fibers at the rupture site. Post-translationally, farnesylation is required for nuclear envelope localization.

Its subcellular location is the nucleus membrane. In terms of biological role, nuclear envelope-associated factor that is involved in the nuclear envelope ruptures during interphase (NERDI) repair, where it is locally recruited by CHMP5 and reduces cytoskeletal stress through its action on SYN2 to help reseal the ruptured membrane. The protein is BRO1 domain-containing protein BROX of Mus musculus (Mouse).